A 342-amino-acid chain; its full sequence is Trans-3-hydroxy-L-proline dehydratase (342 aa).

S90 serves as the catalytic Proton acceptor. Residues 91–92, D252, and 257–258 contribute to the substrate site; these read GS and GT.

Belongs to the proline racemase family.

It carries out the reaction trans-3-hydroxy-L-proline = 1-pyrroline-2-carboxylate + H2O. It catalyses the reaction trans-4-hydroxy-L-proline = cis-4-hydroxy-D-proline. Functionally, catalyzes the dehydration of trans-3-hydroxy-L-proline (t3LHyp) to Delta(1)-pyrroline-2-carboxylate (Pyr2C). Can also catalyze the epimerization of trans-4-hydroxy-L-proline (t4LHyp) to cis-4-hydroxy-D-proline (c4DHyp), albeit with 30-fold lower efficiency. Is likely involved in both degradation pathways that convert t3LHyp to L-proline and t4LHyp to alpha-ketoglutarate, which would allow A.tumefaciens to grow on t3LHyp or t4LHyp as a sole carbon source. Displays no proline racemase activity. The sequence is that of Trans-3-hydroxy-L-proline dehydratase from Agrobacterium fabrum (strain C58 / ATCC 33970) (Agrobacterium tumefaciens (strain C58)).